A 701-amino-acid polypeptide reads, in one-letter code: DNA ligase A (701 aa).

Positions 1–23 are disordered; the sequence is MSEKATGEVEAELPEHPDADERR. NAD(+)-binding positions include 49 to 53, 99 to 100, and Glu-129; these read DAEFD and SL. Catalysis depends on Lys-131, which acts as the N6-AMP-lysine intermediate. NAD(+)-binding residues include Arg-152, Glu-192, Lys-308, and Lys-332. 4 residues coordinate Zn(2+): Cys-426, Cys-429, Cys-445, and Cys-451. A BRCT domain is found at 615-701; the sequence is SIERTLEGLS…EQGPPVEPAE (87 aa).

Belongs to the NAD-dependent DNA ligase family. LigA subfamily. Mg(2+) is required as a cofactor. Requires Mn(2+) as cofactor.

The enzyme catalyses NAD(+) + (deoxyribonucleotide)n-3'-hydroxyl + 5'-phospho-(deoxyribonucleotide)m = (deoxyribonucleotide)n+m + AMP + beta-nicotinamide D-nucleotide.. DNA ligase that catalyzes the formation of phosphodiester linkages between 5'-phosphoryl and 3'-hydroxyl groups in double-stranded DNA using NAD as a coenzyme and as the energy source for the reaction. It is essential for DNA replication and repair of damaged DNA. Probably the only ligase required for non-homologous end joining (NHEJ) repair of 3-overhangs. In Mycolicibacterium smegmatis (strain ATCC 700084 / mc(2)155) (Mycobacterium smegmatis), this protein is DNA ligase A.